A 284-amino-acid polypeptide reads, in one-letter code: Diaminopimelate epimerase (284 aa).

Substrate-binding residues include Asn20, Gln53, and Asn73. The active-site Proton donor is the Cys82. Substrate-binding positions include 83–84 (GN), Asn167, Asn200, and 218–219 (ER). Residue Cys227 is the Proton acceptor of the active site. Position 228–229 (228–229 (GS)) interacts with substrate.

Belongs to the diaminopimelate epimerase family. As to quaternary structure, homodimer.

Its subcellular location is the cytoplasm. It carries out the reaction (2S,6S)-2,6-diaminopimelate = meso-2,6-diaminopimelate. It participates in amino-acid biosynthesis; L-lysine biosynthesis via DAP pathway; DL-2,6-diaminopimelate from LL-2,6-diaminopimelate: step 1/1. Catalyzes the stereoinversion of LL-2,6-diaminopimelate (L,L-DAP) to meso-diaminopimelate (meso-DAP), a precursor of L-lysine and an essential component of the bacterial peptidoglycan. The sequence is that of Diaminopimelate epimerase from Xanthomonas campestris pv. campestris (strain ATCC 33913 / DSM 3586 / NCPPB 528 / LMG 568 / P 25).